The primary structure comprises 131 residues: Small ribosomal subunit protein uS11 (131 aa).

This sequence belongs to the universal ribosomal protein uS11 family. In terms of assembly, part of the 30S ribosomal subunit.

Its function is as follows. Located on the platform of the 30S subunit. The chain is Small ribosomal subunit protein uS11 from Methanospirillum hungatei JF-1 (strain ATCC 27890 / DSM 864 / NBRC 100397 / JF-1).